A 320-amino-acid polypeptide reads, in one-letter code: Cytochrome f (320 aa).

Residues 1 to 35 form the signal peptide; sequence MQTRNTFSWIKEEITRSISVSLMIYIITGASISNA. Residues Y36, C56, C59, and H60 each contribute to the heme site. The helical transmembrane segment at 286-306 threads the bilayer; that stretch reads VQGLLFFLASIVFAQIFLVLK.

Belongs to the cytochrome f family. In terms of assembly, the 4 large subunits of the cytochrome b6-f complex are cytochrome b6, subunit IV (17 kDa polypeptide, petD), cytochrome f and the Rieske protein, while the 4 small subunits are PetG, PetL, PetM and PetN. The complex functions as a dimer. Heme is required as a cofactor.

It localises to the plastid. Its subcellular location is the chloroplast thylakoid membrane. In terms of biological role, component of the cytochrome b6-f complex, which mediates electron transfer between photosystem II (PSII) and photosystem I (PSI), cyclic electron flow around PSI, and state transitions. The polypeptide is Cytochrome f (Gossypium barbadense (Sea Island cotton)).